We begin with the raw amino-acid sequence, 71 residues long: Defensin-like protein 124 (71 aa).

The first 25 residues, M1–G25, serve as a signal peptide directing secretion. Intrachain disulfides connect C28–C71, C40–C60, C45–C65, and C49–C67.

It belongs to the DEFL family.

The protein localises to the secreted. The chain is Defensin-like protein 124 (LCR16) from Arabidopsis thaliana (Mouse-ear cress).